The following is a 505-amino-acid chain: ATP synthase subunit alpha (505 aa).

Residue 170 to 177 (GDRQTGKT) participates in ATP binding.

Belongs to the ATPase alpha/beta chains family. F-type ATPases have 2 components, CF(1) - the catalytic core - and CF(0) - the membrane proton channel. CF(1) has five subunits: alpha(3), beta(3), gamma(1), delta(1), epsilon(1). CF(0) has four main subunits: a(1), b(1), b'(1) and c(9-12).

The protein localises to the cellular thylakoid membrane. The enzyme catalyses ATP + H2O + 4 H(+)(in) = ADP + phosphate + 5 H(+)(out). Functionally, produces ATP from ADP in the presence of a proton gradient across the membrane. The alpha chain is a regulatory subunit. This Prochlorococcus marinus (strain MIT 9313) protein is ATP synthase subunit alpha.